The chain runs to 446 residues: Eukaryotic translation initiation factor 2 subunit gamma (446 aa).

Residues Q21–V227 form the tr-type G domain. The segment at G30–S37 is G1. GTP is bound at residue A33–T38. The interval N58 to K62 is G2. The interval D114 to G117 is G3. Residues N170–D173 and S205–Q207 contribute to the GTP site. The interval N170–D173 is G4. The G5 stretch occupies residues S205 to Q207. The segment at A436–V446 is interacts with cdc123.

This sequence belongs to the TRAFAC class translation factor GTPase superfamily. Classic translation factor GTPase family. EIF2G subfamily. Eukaryotic translation initiation factor 2 eIF2 is a heterotrimeric complex composed of an alpha, a beta and a gamma subunit. The factors eIF-1, eIF-2, eIF-3, TIF5/eIF-5 and methionyl-tRNAi form a multifactor complex (MFC) that may bind to the 40S ribosome. Interacts with cdc123; the interaction is direct.

The protein localises to the cytoplasm. Its subcellular location is the cytosol. It catalyses the reaction GTP + H2O = GDP + phosphate + H(+). Its function is as follows. As a subunit of eukaryotic initiation factor 2 eIF2, involved in the early steps of protein synthesis. In the presence of GTP, eIF-2 forms a ternary complex with initiator tRNA Met-tRNAi and then recruits the 40S ribosomal complex and initiation factors eIF-1, eIF-1A and eIF-3 to form the 43S pre-initiation complex (43S PIC), a step that determines the rate of protein translation. The 43S PIC binds to mRNA and scans downstream to the initiation codon, where it forms a 48S initiation complex by codon-anticodon base pairing. This leads to the displacement of eIF-1 to allow GTPase-activating protein (GAP) eIF-5-mediated hydrolysis of eIF2-bound GTP. Hydrolysis of GTP and release of Pi, which makes GTP hydrolysis irreversible, causes the release of the eIF-2-GDP binary complex from the 40S subunit, an event that is essential for the subsequent joining of the 60S ribosomal subunit to form an elongation-competent 80S ribosome. In order for eIF-2 to recycle and catalyze another round of initiation, the GDP bound to eIF-2 must be exchanged with GTP by way of a reaction catalyzed by GDP-GTP exchange factor (GEF) eIF-2B. The chain is Eukaryotic translation initiation factor 2 subunit gamma (tif213) from Schizosaccharomyces pombe (strain 972 / ATCC 24843) (Fission yeast).